Consider the following 83-residue polypeptide: Protein FAM240A (83 aa).

It belongs to the FAM240 family.

In Homo sapiens (Human), this protein is Protein FAM240A.